The sequence spans 697 residues: Exocyst complex component 7 (697 aa).

The interval 1–384 (MIPPQEASAR…FSTVLTVFPI (384 aa)) is SEC8 and ARHQ binding. Coiled-coil stretches lie at residues 5–42 (QEAS…TRNM) and 63–85 (VHKQ…SCLD). Residue Ser-133 is modified to Phosphoserine. Residues 238–270 (FRKSSSSSGVPYSPAIPNKRKDTPTKKPIKRPG) are disordered.

This sequence belongs to the EXO70 family. As to quaternary structure, the exocyst complex is composed of EXOC1, EXOC2, EXOC3, EXOC4, EXOC5, EXOC6, EXOC7 and EXOC8. Interacts with RAB11FIP3. Interacts with ARHQ in a GTP-dependent manner.

The protein resides in the cytoplasm. It is found in the cytosol. The protein localises to the cell membrane. It localises to the midbody. Its subcellular location is the midbody ring. Functionally, component of the exocyst complex involved in the docking of exocytic vesicles with fusion sites on the plasma membrane. In adipocytes, plays a crucial role in targeting SLC2A4 vesicle to the plasma membrane in response to insulin, perhaps directing the vesicle to the precise site of fusion. It is required for neuron survival and plays an essential role in cortical development. This chain is Exocyst complex component 7 (Exoc7), found in Mus musculus (Mouse).